The primary structure comprises 246 residues: Mast cell protease-like protein (246 aa).

The signal sequence occupies residues 1-18; sequence MQALLFLMALLLPSGAGA. The propeptide at 19-20 is activation peptide; sequence EE. The region spanning 21-244 is the Peptidase S1 domain; it reads IIGGVESEPH…HVPWINRVIK (224 aa). Cys-50 and Cys-66 are joined by a disulfide. Active-site charge relay system residues include His-65 and Asp-109. Intrachain disulfides connect Cys-143-Cys-208 and Cys-174-Cys-187. Ser-202 functions as the Charge relay system in the catalytic mechanism.

This sequence belongs to the peptidase S1 family. Granzyme subfamily.

The polypeptide is Mast cell protease-like protein (Mcptl) (Mus musculus (Mouse)).